A 320-amino-acid chain; its full sequence is Putative membrane-bound redox modulator Alx (320 aa).

The Periplasmic portion of the chain corresponds to 1–6; that stretch reads MNTVGT. A helical transmembrane segment spans residues 7 to 27; the sequence is PLLWGGFAVVVAIMLAIDLLL. Over 28 to 43 the chain is Cytoplasmic; the sequence is QGRRGAHAMTMKQAAA. Residues 44-64 traverse the membrane as a helical segment; it reads WSLVWVTLSLLFNAAFWWYLV. Topologically, residues 65–89 are periplasmic; sequence QTEGRAVADPQALAFLTGYLIEKSL. The helical transmembrane segment at 90–110 threads the bilayer; it reads AVDNVFVWLMLFSYFSVPAAL. Residues 111 to 113 are Cytoplasmic-facing; that stretch reads QRR. A helical membrane pass occupies residues 114-134; that stretch reads VLVYGVLGAIVLRTIMIFTGS. W135 is a topological domain (periplasmic). Residues 136–156 form a helical membrane-spanning segment; the sequence is LISQFDWILYIFGAFLLFTGV. Residues 157–198 lie on the Cytoplasmic side of the membrane; the sequence is KMALAHEDESGIGDKPLVRWLRGHLRMTDTIDNEHFFVRKNG. The chain crosses the membrane as a helical span at residues 199 to 219; sequence LLYATPLMLVLILVELSDVIF. Over 220-225 the chain is Periplasmic; it reads AVDSIP. A helical transmembrane segment spans residues 226 to 246; it reads AIFAVTTDPFIVLTSNLFAIL. Topologically, residues 247-261 are cytoplasmic; it reads GLRAMYFLLAGVAER. A helical membrane pass occupies residues 262–282; the sequence is FSMLKYGLAVILVFIGIKMLI. Topologically, residues 283-286 are periplasmic; the sequence is VDFY. A helical transmembrane segment spans residues 287 to 307; sequence HIPIAVSLGVVFGILVMTFII. At 308 to 320 the chain is on the cytoplasmic side; sequence NAWVNYRHDKQRG.

The protein belongs to the TerC family.

Its subcellular location is the cell inner membrane. Functionally, has been proposed to be a redox modulator. In Shigella flexneri, this protein is Putative membrane-bound redox modulator Alx (alx).